A 267-amino-acid chain; its full sequence is Soluble interferon gamma receptor OPG193 (267 aa).

The N-terminal stretch at 1 to 17 (MRYIIILAVLFINSIHA) is a signal peptide. Residues asparagine 42 and asparagine 150 are each glycosylated (N-linked (GlcNAc...) asparagine; by host).

It belongs to the type II cytokine receptor family. In terms of assembly, homodimer. Interacts with host IFNG.

The protein resides in the secreted. In terms of biological role, counteracts the antiviral effects of host IFN-gamma. Acts as a soluble IFN-gamma receptor and thus inhibits the interaction between host IFN-gamma and its receptor. This is Soluble interferon gamma receptor OPG193 (OPG193) from Cynomys gunnisoni (Gunnison's prairie dog).